A 240-amino-acid chain; its full sequence is UDP-2,3-diacylglucosamine hydrolase (240 aa).

Residues Asp8, His10, Asp41, Asn79, and His114 each coordinate Mn(2+). 79–80 contributes to the substrate binding site; it reads NR. Residues Asp122, Ser160, Asn164, Lys167, and His195 each contribute to the substrate site. Residues His195 and His197 each contribute to the Mn(2+) site.

It belongs to the LpxH family. Mn(2+) is required as a cofactor.

The protein resides in the cell inner membrane. The enzyme catalyses UDP-2-N,3-O-bis[(3R)-3-hydroxytetradecanoyl]-alpha-D-glucosamine + H2O = 2-N,3-O-bis[(3R)-3-hydroxytetradecanoyl]-alpha-D-glucosaminyl 1-phosphate + UMP + 2 H(+). The protein operates within glycolipid biosynthesis; lipid IV(A) biosynthesis; lipid IV(A) from (3R)-3-hydroxytetradecanoyl-[acyl-carrier-protein] and UDP-N-acetyl-alpha-D-glucosamine: step 4/6. Functionally, hydrolyzes the pyrophosphate bond of UDP-2,3-diacylglucosamine to yield 2,3-diacylglucosamine 1-phosphate (lipid X) and UMP by catalyzing the attack of water at the alpha-P atom. Involved in the biosynthesis of lipid A, a phosphorylated glycolipid that anchors the lipopolysaccharide to the outer membrane of the cell. This Enterobacter sp. (strain 638) protein is UDP-2,3-diacylglucosamine hydrolase.